Reading from the N-terminus, the 282-residue chain is 1,4-dihydroxy-6-naphtoate synthase (282 aa).

Residues 57-59 (KVS) and 109-110 (TA) each bind substrate. The active-site Proton acceptor is the His153.

This sequence belongs to the MqnA/MqnD family. MqnD subfamily.

It carries out the reaction cyclic dehypoxanthinylfutalosinate = 1,4-dihydroxy-6-naphthoate + dihydroxyacetone. The protein operates within quinol/quinone metabolism; menaquinone biosynthesis. In terms of biological role, catalyzes the conversion of cyclic dehypoxanthine futalosine (cyclic DHFL) into 1,4-dihydroxy-6-naphthoate, a step in the biosynthesis of menaquinone (MK, vitamin K2). This chain is 1,4-dihydroxy-6-naphtoate synthase, found in Streptomyces coelicolor (strain ATCC BAA-471 / A3(2) / M145).